The following is a 158-amino-acid chain: 6,7-dimethyl-8-ribityllumazine synthase (158 aa).

5-amino-6-(D-ribitylamino)uracil contacts are provided by residues Phe22, 56 to 58 (ALE), and 80 to 82 (VVI). Residue 85 to 86 (ET) coordinates (2S)-2-hydroxy-3-oxobutyl phosphate. Residue His88 is the Proton donor of the active site. Asn113 is a 5-amino-6-(D-ribitylamino)uracil binding site. Arg127 lines the (2S)-2-hydroxy-3-oxobutyl phosphate pocket.

Belongs to the DMRL synthase family.

It catalyses the reaction (2S)-2-hydroxy-3-oxobutyl phosphate + 5-amino-6-(D-ribitylamino)uracil = 6,7-dimethyl-8-(1-D-ribityl)lumazine + phosphate + 2 H2O + H(+). The protein operates within cofactor biosynthesis; riboflavin biosynthesis; riboflavin from 2-hydroxy-3-oxobutyl phosphate and 5-amino-6-(D-ribitylamino)uracil: step 1/2. In terms of biological role, catalyzes the formation of 6,7-dimethyl-8-ribityllumazine by condensation of 5-amino-6-(D-ribitylamino)uracil with 3,4-dihydroxy-2-butanone 4-phosphate. This is the penultimate step in the biosynthesis of riboflavin. The polypeptide is 6,7-dimethyl-8-ribityllumazine synthase (Neisseria meningitidis serogroup C / serotype 2a (strain ATCC 700532 / DSM 15464 / FAM18)).